A 142-amino-acid chain; its full sequence is Hemoglobin subunit alpha-2 (142 aa).

Residues 2 to 142 enclose the Globin domain; sequence VLSAADKSNI…VSTVLTSKYR (141 aa). H59 provides a ligand contact to O2. Heme b is bound at residue H88.

Belongs to the globin family. In terms of assembly, heterotetramer of two alpha chains and two beta chains. As to expression, red blood cells.

Its function is as follows. Involved in oxygen transport from the lung to the various peripheral tissues. This chain is Hemoglobin subunit alpha-2, found in Bubalus bubalis (Domestic water buffalo).